Reading from the N-terminus, the 447-residue chain is MEKARALEEQWPGARDAFHVPSYASLGLGDQTAAVRYLCGHSLGCMPRKTRGSVEAELSAWSARAVEAHVRHPGGTEWVNTDLPLVPQMARMVGASQQEVAVMGSLTANLNALLVAFYRPRGRRTKILLEKQVFPSDFHAFWNQAALHGLDPAATLVQVAPRAGEHTLRTEDIVAAIETHRAELALVCLPGVQYYTGQLLDMASIVAAARREPSIVVGFDLAHAVGNVQLQLHEWGADFACWCSYKYLNAGPGGIAGLFVHERHHGGTLPRLAGWWGTNAATRFEMRQTYDPLPDALGFRQSNPSVLDVAALRASLEVFEDFGGMERVRARSLALTGYLYELLTQSVFYRPEVGADGVGFTILTPANPAERGAQLSLLFWPHSDDPDKNTMPRVFADLRQNGVLGDERHPDVIRLTPCALYNTFMEVFESVQLLNAALERLAPESAV.

Residues L106, T107, 134 to 137 (FPSD), D220, H223, and Y245 each bind pyridoxal 5'-phosphate. K246 carries the N6-(pyridoxal phosphate)lysine modification. Residues W275 and N303 each contribute to the pyridoxal 5'-phosphate site.

It belongs to the kynureninase family. Homodimer. Pyridoxal 5'-phosphate serves as cofactor.

The protein localises to the cytoplasm. The enzyme catalyses L-kynurenine + H2O = anthranilate + L-alanine + H(+). The catalysed reaction is 3-hydroxy-L-kynurenine + H2O = 3-hydroxyanthranilate + L-alanine + H(+). It functions in the pathway amino-acid degradation; L-kynurenine degradation; L-alanine and anthranilate from L-kynurenine: step 1/1. The protein operates within cofactor biosynthesis; NAD(+) biosynthesis; quinolinate from L-kynurenine: step 2/3. Catalyzes the cleavage of L-kynurenine (L-Kyn) and L-3-hydroxykynurenine (L-3OHKyn) into anthranilic acid (AA) and 3-hydroxyanthranilic acid (3-OHAA), respectively. This chain is Kynureninase, found in Eremothecium gossypii (strain ATCC 10895 / CBS 109.51 / FGSC 9923 / NRRL Y-1056) (Yeast).